A 468-amino-acid polypeptide reads, in one-letter code: MRSWVVGARLLLLLQLVLVLGAVRLPPCTDPRHCTDPPRYTPDWPSLDSRPLPAWFDEAKFGVFVHWGVFSVPAWGSEWFWWHWQGEKLPQYESFMKENYPPDFSYADFGPRFTARFFNPDSWADLFKAAGAKYVVLTTKHHEGYTNWPSPVSWNWNSKDVGPHRDLVGELGTAIRKRNIRYGLYHSLLEWFHPLYLRDKKNGFKTQYFVNAKTMPELYDLVNRYKPDLIWSDGEWECPDTYWNSTDFLAWLYNDSPVKDEVVVNDRWGQNCSCHHGGYYNCKDKFQPETLPDHKWEMCTSIDQRSWGYRRDMEMADITNESTIISELVQTVSLGGNYLLNVGPTKDGLIVPIFQERLLAVGKWLSINGEAIYASKPWRVQSEKNSVWYTSKGLAVYAILLHWPEYGILSLISPIATSTTKVTMLGIQKDLKWSLNPSGKGLLVFLPQLPPAALPTEFAWTIKLTGVK.

The first 22 residues, 1–22 (MRSWVVGARLLLLLQLVLVLGA), serve as a signal peptide directing secretion. Phosphothreonine is present on threonine 173. 3 N-linked (GlcNAc...) asparagine glycosylation sites follow: asparagine 244, asparagine 271, and asparagine 320.

Belongs to the glycosyl hydrolase 29 family. In terms of assembly, homotetramer.

It is found in the lysosome. The catalysed reaction is an alpha-L-fucoside + H2O = L-fucose + an alcohol. The enzyme catalyses a neolactoside IV(2)-alpha-Fuc-nLc4Cer(d18:1(4E)) + H2O = a neolactoside nLc4Cer(d18:1(4E)) + L-fucose. It carries out the reaction a neolactoside IV(2)-alpha-Fuc-nLc4Cer(d18:0) + H2O = a neolactoside nLc4Cer(d18:0) + L-fucose. Alpha-L-fucosidase is responsible for hydrolyzing the alpha-1,6-linked fucose joined to the reducing-end N-acetylglucosamine of the carbohydrate moieties of glycoproteins. The sequence is that of Tissue alpha-L-fucosidase (FUCA1) from Bos taurus (Bovine).